The primary structure comprises 930 residues: Protein translocase subunit SecA (930 aa).

ATP-binding positions include Gln87, 105 to 109, and Asp515; that span reads GEGKT. Zn(2+) is bound by residues Cys914, Cys916, Cys925, and His926.

This sequence belongs to the SecA family. Monomer and homodimer. Part of the essential Sec protein translocation apparatus which comprises SecA, SecYEG and auxiliary proteins SecDF-YajC and YidC. Zn(2+) serves as cofactor.

It localises to the cell inner membrane. It is found in the cytoplasm. The enzyme catalyses ATP + H2O + cellular proteinSide 1 = ADP + phosphate + cellular proteinSide 2.. Its function is as follows. Part of the Sec protein translocase complex. Interacts with the SecYEG preprotein conducting channel. Has a central role in coupling the hydrolysis of ATP to the transfer of proteins into and across the cell membrane, serving both as a receptor for the preprotein-SecB complex and as an ATP-driven molecular motor driving the stepwise translocation of polypeptide chains across the membrane. In Burkholderia vietnamiensis (strain G4 / LMG 22486) (Burkholderia cepacia (strain R1808)), this protein is Protein translocase subunit SecA.